The chain runs to 420 residues: Maturation protein A2 (420 aa).

RNA-binding regions lie at residues 158 to 176 (IKYL…RAVK), 226 to 236 (QNRHDKIQRLL), and 294 to 298 (PVSDW).

It belongs to the Leviviricetes maturation protein family. Interacts with host MurA; this interaction inhibits the first step in host cell wall synthesis. Interacts with the capsid protein.

Its subcellular location is the virion. Functionally, induces host cell lysis. Inhibits host MurA activity thereby blocking the synthesis of murein precursors necessary for the host cell wall biosynthesis. May be responsible for the attachment to the host pilus. Makes extensive contacts with the viral genome. This is Maturation protein A2 from Escherichia virus Qbeta (Bacteriophage Q-beta).